A 262-amino-acid polypeptide reads, in one-letter code: Phosphatidylglycerol--prolipoprotein diacylglyceryl transferase (262 aa).

A run of 3 helical transmembrane segments spans residues 17–37 (LKVH…WILA), 57–77 (LVFY…ALFY), and 92–112 (IWEG…AMYA). A 1,2-diacyl-sn-glycero-3-phospho-(1'-sn-glycerol) is bound at residue R140. 2 helical membrane passes run 200-220 (MAVS…VEFV) and 234-254 (WLTM…VLLA).

The protein belongs to the Lgt family.

The protein localises to the cell inner membrane. It carries out the reaction L-cysteinyl-[prolipoprotein] + a 1,2-diacyl-sn-glycero-3-phospho-(1'-sn-glycerol) = an S-1,2-diacyl-sn-glyceryl-L-cysteinyl-[prolipoprotein] + sn-glycerol 1-phosphate + H(+). It functions in the pathway protein modification; lipoprotein biosynthesis (diacylglyceryl transfer). Functionally, catalyzes the transfer of the diacylglyceryl group from phosphatidylglycerol to the sulfhydryl group of the N-terminal cysteine of a prolipoprotein, the first step in the formation of mature lipoproteins. The chain is Phosphatidylglycerol--prolipoprotein diacylglyceryl transferase from Methylococcus capsulatus (strain ATCC 33009 / NCIMB 11132 / Bath).